A 445-amino-acid polypeptide reads, in one-letter code: MAYFPNIGKIAYEGPESRNPFAFKFYNPEEKVGGKTMEEHLRFSVAYWHTFTGDGSDPFGVGNMIRPWDKYSGMDLAKARVEAAFELFEKLNVPFFCFHDVDIAPEGETLSETYKNLDEIVDMIEEYMKTSKTKLLWNTANLFSHPRFVHGAATSCNADVFAYAAAKVKKGLEIAKRLGAENYVFWGGREGYETLLNTDMKLELDNLARFFHMAVDYAKEIGFDGQFLIEPKPKEPTKHQYDFDVATALAFLQTYGLKDYFKFNIEANHATLAGHTFEHELRVARIHGMLGSVDANQGDMLLGWDTDEFPTDLYATTLAMYEILQNGGLGRGGLNFDAKVRRGSFEPEDLFYAHIAGMDSFAIGLKVAHRLLEDRVFEQFIEERYKSYTEGIGREIVEGTADFHKLEQYALQLGEIRNTSGRLERLKTLLNQYLLEVSVPSKARL.

Residues H99 and D102 contribute to the active site. 7 residues coordinate Mg(2+): E230, E266, H269, D294, D305, D307, and D337.

This sequence belongs to the xylose isomerase family. In terms of assembly, homotetramer. Mg(2+) is required as a cofactor.

Its subcellular location is the cytoplasm. The enzyme catalyses alpha-D-xylose = alpha-D-xylulofuranose. The sequence is that of Xylose isomerase from Geobacillus thermodenitrificans (strain NG80-2).